We begin with the raw amino-acid sequence, 415 residues long: Gamma-glutamyl phosphate reductase (415 aa).

Belongs to the gamma-glutamyl phosphate reductase family.

The protein localises to the cytoplasm. It carries out the reaction L-glutamate 5-semialdehyde + phosphate + NADP(+) = L-glutamyl 5-phosphate + NADPH + H(+). Its pathway is amino-acid biosynthesis; L-proline biosynthesis; L-glutamate 5-semialdehyde from L-glutamate: step 2/2. In terms of biological role, catalyzes the NADPH-dependent reduction of L-glutamate 5-phosphate into L-glutamate 5-semialdehyde and phosphate. The product spontaneously undergoes cyclization to form 1-pyrroline-5-carboxylate. In Dictyoglomus turgidum (strain DSM 6724 / Z-1310), this protein is Gamma-glutamyl phosphate reductase.